The following is a 78-amino-acid chain: DNA-directed RNA polymerase subunit omega (78 aa).

The protein belongs to the RNA polymerase subunit omega family. As to quaternary structure, the RNAP catalytic core consists of 2 alpha, 1 beta, 1 beta' and 1 omega subunit. When a sigma factor is associated with the core the holoenzyme is formed, which can initiate transcription.

The enzyme catalyses RNA(n) + a ribonucleoside 5'-triphosphate = RNA(n+1) + diphosphate. Functionally, promotes RNA polymerase assembly. Latches the N- and C-terminal regions of the beta' subunit thereby facilitating its interaction with the beta and alpha subunits. The chain is DNA-directed RNA polymerase subunit omega from Desulfovibrio desulfuricans (strain ATCC 27774 / DSM 6949 / MB).